The chain runs to 343 residues: tRNA N6-adenosine threonylcarbamoyltransferase (343 aa).

Positions 120 and 124 each coordinate Fe cation. Substrate contacts are provided by residues 142-146, aspartate 175, glycine 188, aspartate 192, and asparagine 281; that span reads VVSGG. Position 310 (aspartate 310) interacts with Fe cation.

This sequence belongs to the KAE1 / TsaD family. It depends on Fe(2+) as a cofactor.

The protein localises to the cytoplasm. The enzyme catalyses L-threonylcarbamoyladenylate + adenosine(37) in tRNA = N(6)-L-threonylcarbamoyladenosine(37) in tRNA + AMP + H(+). Required for the formation of a threonylcarbamoyl group on adenosine at position 37 (t(6)A37) in tRNAs that read codons beginning with adenine. Is involved in the transfer of the threonylcarbamoyl moiety of threonylcarbamoyl-AMP (TC-AMP) to the N6 group of A37, together with TsaE and TsaB. TsaD likely plays a direct catalytic role in this reaction. This is tRNA N6-adenosine threonylcarbamoyltransferase from Bacillus cereus (strain ATCC 14579 / DSM 31 / CCUG 7414 / JCM 2152 / NBRC 15305 / NCIMB 9373 / NCTC 2599 / NRRL B-3711).